A 718-amino-acid polypeptide reads, in one-letter code: Ribosome-releasing factor 2, mitochondrial (718 aa).

A mitochondrion-targeting transit peptide spans 1–29 (MLKCAWQNGPRQSNRWLWQLSNQIWKRSY). One can recognise a tr-type G domain in the interval 31 to 310 (SKIRNIGILA…AVNSYLPAPE (280 aa)). Residues 40–47 (AHIDAGKT), 104–108 (DTPGH), and 158–161 (NKMD) each bind GTP.

It belongs to the TRAFAC class translation factor GTPase superfamily. Classic translation factor GTPase family. EF-G/EF-2 subfamily.

It localises to the mitochondrion. In terms of biological role, mitochondrial GTPase that mediates the disassembly of ribosomes from messenger RNA at the termination of mitochondrial protein biosynthesis. Not involved in the GTP-dependent ribosomal translocation step during translation elongation. The sequence is that of Ribosome-releasing factor 2, mitochondrial from Drosophila erecta (Fruit fly).